We begin with the raw amino-acid sequence, 750 residues long: uncharacterized protein (750 aa).

Transmembrane regions (helical) follow at residues 2–22 (FVLLMLALVMLFIVQSSTNVI), 33–53 (SLILIPLVTLLAGSITADIFI), 79–99 (LLVLLMYLSIVAVLSTAVVSL), 116–136 (LSIFVGTILNGIIFSAVTIML), and 143–163 (IQSLIILLLFVSLFSFSSPIA). 2 disordered regions span residues 385–461 (DNKG…KKKE) and 571–651 (NKEF…PLTA). Over residues 398-411 (ENTKGDDNSSEKTD) the composition is skewed to basic and acidic residues. Residues 412–424 (TVSVSTKLKTTAD) show a composition bias toward polar residues. Over residues 425-436 (QSESTQMSSEST) the composition is skewed to low complexity. The segment covering 437-451 (ATGISSDPQSQGKMN) has biased composition (polar residues). Residues 452–461 (NKSEEQKKKE) are compositionally biased toward basic and acidic residues. The segment covering 618 to 629 (DSKGNTATNSDT) has biased composition (polar residues). Residues 724 to 744 (ATIVITLFLTVVLLAIAFFFF) form a helical membrane-spanning segment.

It to M.pneumoniae MPN_335.

The protein localises to the cell membrane. This is an uncharacterized protein from Mycoplasma pneumoniae (strain ATCC 29342 / M129 / Subtype 1) (Mycoplasmoides pneumoniae).